The sequence spans 131 residues: Small ribosomal subunit protein uS11 (131 aa).

Belongs to the universal ribosomal protein uS11 family. Part of the 30S ribosomal subunit. Interacts with proteins S7 and S18. Binds to IF-3.

Located on the platform of the 30S subunit, it bridges several disparate RNA helices of the 16S rRNA. Forms part of the Shine-Dalgarno cleft in the 70S ribosome. The protein is Small ribosomal subunit protein uS11 of Buchnera aphidicola subsp. Acyrthosiphon pisum (strain 5A).